The sequence spans 550 residues: Thioredoxin domain-containing protein 2 (550 aa).

Residues 1–50 (MFKKNQKLSKDKGLEVNSVQAGAPEESDVKLNNGGKANERGSNEFLDTAQ) form a disordered region. Phosphoserine is present on residues Ser-42 and Ser-51. The disordered stretch occupies residues 63–428 (MLHMSTEESE…IKSSEDVQPS (366 aa)). 3 stretches are compositionally biased toward polar residues: residues 73-87 (PPQQVSSTSMFSENT), 96-105 (PKSSTKNTQL), and 112-140 (KTSSYSKQTNSSNIPKSLAITTYPKQGST). 22 consecutive repeat copies span residues 104 to 118 (QLKQEDISKTSSYSK), 119 to 133 (QTNSSNIPKSLAITT), 134 to 148 (YPKQGSTLKPAANGT), 149 to 163 (HDREAEKPKSSEDLI), 164 to 178 (QSKKGDIFKPSEDSI), 179 to 193 (QSKKGDMPKSSEDPI), 194 to 208 (QSKKDDTAKSLEDTI), 209 to 223 (QSKNGDMPKSSEDPI), 224 to 238 (QSKKDDTARSLEDSI), 239 to 252 (QSKKGDMPKSSDTI), 253 to 267 (QSKESETPKFLQDTI), 268 to 282 (QSKGGKINKQVKDSM), 283 to 297 (KSKESKIRKPLKDSI), 298 to 312 (QSKENKIPKSSQDSA), 313 to 327 (QPKEGKIHKPLKDSL), 328 to 342 (PSKEGDISKPSEDTI), 343 to 357 (QAKEEITVSPEDTIQ), 358 to 384 (AKEEITMSPEDTIQAKEEITVSPEDTI), 385 to 399 (QAKEEITVSPEDTMQ), 400 to 412 (SKEEITVSPEDTV), 413 to 425 (QSQEGDIKSSEDV), and 426 to 440 (QPSENEIFPFEAEIE). Residues 104 to 440 (QLKQEDISKT…EIFPFEAEIE (337 aa)) are 22 X 15 AA approximate tandem repeat of Q-P-K-X-G-D-I-P-K-S-[PS]-E-[KE]-X-I. Basic and acidic residues-rich tracts occupy residues 148-205 (THDR…KSLE), 217-259 (KSSE…ESET), 277-304 (QVKDSMKSKESKIRKPLKDSIQSKENKI), and 313-348 (QPKEGKIHKPLKDSLPSKEGDISKPSEDTIQAKEEI). Position 158 is a phosphoserine (Ser-158). Residues Ser-351 and Ser-379 each carry the phosphoserine modification. One can recognise a Thioredoxin domain in the interval 401 to 550 (KEEITVSPED…KLEKSIAELK (150 aa)). Ser-407 carries the phosphoserine modification. A disulfide bridge connects residues Cys-477 and Cys-480.

Testis-specific. Strongly expressed in the testicular seminiferous tubules, mostly in the round spermatids.

It is found in the cytoplasm. Probably plays a regulatory role in sperm development. May participate in regulation of fibrous sheath (FS) assembly by supporting the formation of disulfide bonds during sperm tail morphogenesis. May also be required to rectify incorrect disulfide pairing and generate suitable pairs between the FS constituents. Can reduce disulfide bonds in vitro in the presence of NADP and thioredoxin reductase. This chain is Thioredoxin domain-containing protein 2 (Txndc2), found in Rattus norvegicus (Rat).